The primary structure comprises 784 residues: uncharacterized protein (784 aa).

In terms of domain architecture, 3'-5' exonuclease spans 422–619 (IRIVQNEQDL…EVFQKIVEVV (198 aa)).

This is an uncharacterized protein from Caenorhabditis elegans.